A 258-amino-acid polypeptide reads, in one-letter code: Large ribosomal subunit protein bL21 (258 aa).

The segment covering 140–159 has biased composition (basic and acidic residues); the sequence is KAKDAKDEAPKAAPKAEKKK. The interval 140–181 is disordered; sequence KAKDAKDEAPKAAPKAEKKKAAPKKAKAEAAPAAADEGTRPA.

The protein belongs to the bacterial ribosomal protein bL21 family. In terms of assembly, part of the 50S ribosomal subunit. Contacts protein L20.

Its function is as follows. This protein binds to 23S rRNA in the presence of protein L20. The protein is Large ribosomal subunit protein bL21 of Jannaschia sp. (strain CCS1).